Reading from the N-terminus, the 214-residue chain is Small ribosomal subunit protein uS3 (214 aa).

Positions 39–107 (IRAYLLKKPA…EVWVAVEEVK (69 aa)) constitute a KH type-2 domain.

Belongs to the universal ribosomal protein uS3 family. Part of the 30S ribosomal subunit. Forms a tight complex with proteins S10 and S14.

Its function is as follows. Binds the lower part of the 30S subunit head. Binds mRNA in the 70S ribosome, positioning it for translation. This Protochlamydia amoebophila (strain UWE25) protein is Small ribosomal subunit protein uS3.